The sequence spans 245 residues: Tetraspanin-6 (245 aa).

At 1–19 (MASPSRRLQTKPVITCLKS) the chain is on the cytoplasmic side. Residues 20 to 40 (VLLIYTFIFWITGVILLAVGI) traverse the membrane as a helical segment. The Extracellular segment spans residues 41–59 (WGKVSLENYFSLLNEKATN). The chain crosses the membrane as a helical span at residues 60–80 (VPFVLIGTGTVIILLGTFGCF). Over 81–93 (ATCRTSAWMLKLY) the chain is Cytoplasmic. A helical transmembrane segment spans residues 94–114 (AMFLTLIFLVELVAAIVGFVF). Residues 115 to 208 (RHEIKNSFKS…IKVMTTIESE (94 aa)) lie on the Extracellular side of the membrane. N-linked (GlcNAc...) asparagine glycosylation is present at Asn134. A helical transmembrane segment spans residues 209-229 (MGVVAGISFGVACFQLIGIFL). Over 230-245 (AYCLSRAITNNQYEIV) the chain is Cytoplasmic.

The protein belongs to the tetraspanin (TM4SF) family.

It is found in the membrane. The sequence is that of Tetraspanin-6 (Tspan6) from Mus musculus (Mouse).